The following is a 65-amino-acid chain: UPF0434 protein BBta_0300 (65 aa).

This sequence belongs to the UPF0434 family.

The sequence is that of UPF0434 protein BBta_0300 from Bradyrhizobium sp. (strain BTAi1 / ATCC BAA-1182).